Reading from the N-terminus, the 309-residue chain is Glycine--tRNA ligase alpha subunit (309 aa).

This sequence belongs to the class-II aminoacyl-tRNA synthetase family. Tetramer of two alpha and two beta subunits.

The protein resides in the cytoplasm. The enzyme catalyses tRNA(Gly) + glycine + ATP = glycyl-tRNA(Gly) + AMP + diphosphate. This chain is Glycine--tRNA ligase alpha subunit, found in Anaeromyxobacter sp. (strain K).